The primary structure comprises 399 residues: Sperm equatorial segment protein 1 (399 aa).

Positions 1 to 18 are cleaved as a signal peptide; it reads MKLVVLVALWLWPSSLLA. The N-linked (GlcNAc...) asparagine glycan is linked to Asn-128. Residues 136–145 are compositionally biased toward basic and acidic residues; it reads EEPFIEKEPE. The disordered stretch occupies residues 136 to 250; that stretch reads EEPFIEKEPE…PSAEDLPGRH (115 aa). Residues 157 to 167 show a composition bias toward acidic residues; it reads PEPELEPEPEP. Polar residues predominate over residues 182-206; it reads VTSTTPNKELTGTSRISSMATQPAN. Residues 207–225 show a composition bias toward low complexity; that stretch reads TQATRITVTVKTTSTMDVS.

Belongs to the SPESP1 family. In terms of processing, glycosylated. In testis there are two predominant forms of 77- and 67-kDa and a form of 47-kDa, whereas in epididymal sperm from caput, corpus, and cauda there are two forms of 47- and 43-kDa. Testis forms contain complex carbohydrate residues. Epididymal sperm forms are N-glycosylated. Then undergoes significant glycosylation in the testis and that the majority of these glycoconjugates are removed by the time sperm reach the caput epididymis. Testis specific.

It is found in the cytoplasmic vesicle. The protein localises to the secretory vesicle. It localises to the acrosome. Involved in fertilization ability of sperm. The polypeptide is Sperm equatorial segment protein 1 (Mus musculus (Mouse)).